Consider the following 213-residue polypeptide: uncharacterized protein (213 aa).

Residues G53, E74, and D96 each coordinate S-adenosyl-L-methionine.

It belongs to the methyltransferase superfamily. YrrT family.

Could be a S-adenosyl-L-methionine-dependent methyltransferase. This is an uncharacterized protein from Oceanobacillus iheyensis (strain DSM 14371 / CIP 107618 / JCM 11309 / KCTC 3954 / HTE831).